Here is a 155-residue protein sequence, read N- to C-terminus: Urease accessory protein UreE (155 aa).

Belongs to the UreE family.

The protein resides in the cytoplasm. Involved in urease metallocenter assembly. Binds nickel. Probably functions as a nickel donor during metallocenter assembly. The protein is Urease accessory protein UreE of Synechococcus sp. (strain CC9311).